The chain runs to 192 residues: uncharacterized protein (192 aa).

The region spanning 29 to 160 (RRQAAVLIPL…PLDIQRRGHD (132 aa)) is the Nudix hydrolase domain. The Nudix box motif lies at 67–89 (GAVDSTDASLIAAALREAHEEVA). Residues glutamate 83 and glutamate 87 each coordinate Mg(2+).

Belongs to the Nudix hydrolase family. PCD1 subfamily. Mn(2+) is required as a cofactor. Mg(2+) serves as cofactor.

Probably mediates the hydrolysis of some nucleoside diphosphate derivatives. This is an uncharacterized protein from Enterobacter sp. (strain 638).